The sequence spans 572 residues: MFS-type transporter pydD (572 aa).

A compositionally biased stretch (basic and acidic residues) spans 1–15 (MLQEDKSSETMHDPS). Positions 1-46 (MLQEDKSSETMHDPSTRGVETRNVTAVDSPLETATTSESPETERTN) are disordered. An N-linked (GlcNAc...) asparagine glycan is attached at asparagine 23. The segment covering 29-39 (SPLETATTSES) has biased composition (low complexity). 8 consecutive transmembrane segments (helical) span residues 56 to 76 (FWAL…EGTI), 88 to 108 (LGGG…MTAM), 123 to 143 (WPML…GGAT), 156 to 176 (GIGA…VVPL), 185 to 205 (IVMG…GLIV), 212 to 232 (WTFY…FSFL), 255 to 275 (ALFV…GSVY), and 282 to 302 (VLVP…FEGS). N-linked (GlcNAc...) asparagine glycosylation is present at asparagine 317. 6 helical membrane passes run 321–341 (VGVM…LYFM), 358–378 (VQIL…GFLM), 386–406 (PIHY…SLLD), 419–439 (IVYS…LLAP), 451–471 (TWSF…AAVF), and 529–549 (WLVS…AREV).

The protein belongs to the major facilitator superfamily.

Its subcellular location is the membrane. In terms of biological role, MFS-type transporter; part of the gene cluster that mediates the biosynthesis of pyrrocidines, fungal natural products containing a macrocyclic para-cyclophane connected to a decahydrofluorene ring system that show potent antibiotic activities toward Gram-negative bacteria. The polypeptide is MFS-type transporter pydD (Acremonium sp).